A 293-amino-acid chain; its full sequence is Ribosomal protein L11 methyltransferase (293 aa).

Thr-145, Gly-166, Asp-188, and Asn-230 together coordinate S-adenosyl-L-methionine.

It belongs to the methyltransferase superfamily. PrmA family.

It is found in the cytoplasm. The catalysed reaction is L-lysyl-[protein] + 3 S-adenosyl-L-methionine = N(6),N(6),N(6)-trimethyl-L-lysyl-[protein] + 3 S-adenosyl-L-homocysteine + 3 H(+). Its function is as follows. Methylates ribosomal protein L11. The chain is Ribosomal protein L11 methyltransferase from Haemophilus ducreyi (strain 35000HP / ATCC 700724).